A 530-amino-acid polypeptide reads, in one-letter code: MKSIIFNEIKKILECDFALENPKDKNLAHFATPLAFSLAKELKKSPMFIASDLASKFQNHDCFESVEAVNGYLNFRISKTFLNELANQALTNPNDFTKGEKKQESFLLEYVSANPTGPLHIGHARGAVFGNTLTRLARHLGYKFDTEYYVNDAGNQIYLLGLSILLSVKENILHENVEYPEQYYKGEYIADLAKEAFEKFGKEFFSEENIPSLADWAKDKMLVLIKQNLEQAKIKIDSYVSERSYYDALNATLESLKEHKGIYEQEGKIWLASSQKGDEKDRVIIREDGRGTYLAADIVYHKDKMSRGYGKCINIWGADHHGYIPRMKAAMEFLGFDSNNLEIILAQMVSLLKDGEPYKMSKRAGNFILMSAVVDEIGSDALRYIFLSKKCDTHLEFDISDLQKEDSSNPVYYINYAHARIYQVFAKAGKKIDDVMGADLQSLNQDGINLLFEALNLKAILNDAFEARALQKIPDYLKNLAANFHKFYNENKVVGSANENDLLKLFSLVALSIKTAFSLMGIEAKNKMEH.

Positions 113-123 (ANPTGPLHIGH) match the 'HIGH' region motif.

Belongs to the class-I aminoacyl-tRNA synthetase family. In terms of assembly, monomer.

Its subcellular location is the cytoplasm. It carries out the reaction tRNA(Arg) + L-arginine + ATP = L-arginyl-tRNA(Arg) + AMP + diphosphate. This Campylobacter jejuni subsp. doylei (strain ATCC BAA-1458 / RM4099 / 269.97) protein is Arginine--tRNA ligase.